The chain runs to 450 residues: FERM domain-containing protein 8 (450 aa).

The FERM domain maps to Met-28–Glu-373.

It localises to the cytoplasm. It is found in the cytosol. The protein localises to the cell membrane. Its function is as follows. Promotes the cell surface stability of RHBDF1 and RHBDF2 and prevents their degradation via the endolysosomal pathway. By acting on RHBDF proteins, involved in ADAM17-mediated ligand shedding. May negatively regulate Wnt signaling. The protein is FERM domain-containing protein 8 (frmd8) of Xenopus tropicalis (Western clawed frog).